A 313-amino-acid chain; its full sequence is Porphobilinogen deaminase (313 aa).

An S-(dipyrrolylmethanemethyl)cysteine modification is found at Cys241.

The protein belongs to the HMBS family. Monomer. Dipyrromethane serves as cofactor.

It carries out the reaction 4 porphobilinogen + H2O = hydroxymethylbilane + 4 NH4(+). The protein operates within porphyrin-containing compound metabolism; protoporphyrin-IX biosynthesis; coproporphyrinogen-III from 5-aminolevulinate: step 2/4. It participates in porphyrin-containing compound metabolism; chlorophyll biosynthesis. Tetrapolymerization of the monopyrrole PBG into the hydroxymethylbilane pre-uroporphyrinogen in several discrete steps. This is Porphobilinogen deaminase from Chlorobium phaeobacteroides (strain DSM 266 / SMG 266 / 2430).